Here is a 535-residue protein sequence, read N- to C-terminus: Dipeptide-binding protein (535 aa).

Positions Met-1–Ala-28 are cleaved as a signal peptide. A disulfide bond links Cys-34 and Cys-262. Glycyl-L-leucine is bound by residues Thr-48–Gly-50, Arg-383–Tyr-385, and Trp-433–Asp-436. Residues Cys-450 and Cys-463 are joined by a disulfide bond.

The protein belongs to the bacterial solute-binding protein 5 family. As to quaternary structure, the complex is composed of two ATP-binding proteins (DppD and DppF), two transmembrane proteins (DppB and DppC) and a solute-binding protein (DppA).

It localises to the periplasm. Its activity is regulated as follows. Heme binding is inhibited by dipeptide. Its function is as follows. Part of the ABC transporter DppABCDF involved in dipeptide transport. Binds dipeptides and accepts a wide range of side chains, including small neutral, bulky hydrophobic, and positively and negatively charged groups. Tripeptides are poor substrates. DppA alone controls the specificity of the Dpp transporter. In addition, plays a role in chemotaxis toward peptides via interaction with the chemotaxis protein Tap. Functionally, binds heme. When a foreign outer membrane heme receptor is expressed in E.coli, DppABCDF can also transport heme and its precursor, 5-aminolevulinic acid (ALA), from the periplasm into the cytoplasm. The chain is Dipeptide-binding protein from Escherichia coli (strain K12).